Reading from the N-terminus, the 161-residue chain is MSLVSQIIINADDELRYPTIGELQSIQNYLITGSNRIRIATIIRDKEKEIIQKASKQIFQLHPEYIAPGGNAAGSRKRSLCLRDYGWYLRLITYGVLAGDKDSIETIGIIGVREMYNSLGVPIIGMLDAIQCLKEASLEMLGQDDAKIISPYFDYIIRGMS.

An N4-methylasparagine modification is found at Asn71. Cys81 contacts (2R,3E)-phycocyanobilin.

It belongs to the phycobiliprotein family. Contains one covalently linked bilin chromophore.

It is found in the plastid. Its subcellular location is the chloroplast thylakoid membrane. In terms of biological role, allophycocyanin is a photosynthetic bile pigment-protein complex with maximum absorption at approximately 650 nanometers. The sequence is that of Allophycocyanin alpha-B chain (apcD) from Porphyra purpurea (Red seaweed).